A 312-amino-acid polypeptide reads, in one-letter code: Transcription factor Ouib (312 aa).

One can recognise a ZAD domain in the interval 4-79; that stretch reads IVCRVCGRQK…IKTQTKWLTI (76 aa). Residues Cys6, Cys9, Cys52, and Cys55 each contribute to the Zn(2+) site. 5 consecutive C2H2-type zinc fingers follow at residues 167 to 189, 195 to 217, 223 to 245, 251 to 273, and 279 to 303; these read YICELCGTHATSKPTFQRHMRKH, FGCKDCDARFLSAGELRAHHRVH, FACRFCEKRYVSYMGRLIHERTH, YVCEECGKKFTTAYVLKNHMVIH, and FRCDICDRSFQRKAHLVTHTRSMMH.

Expressed predominantly in the prothoracic gland during embryonic and larval development.

The protein resides in the nucleus. Transcription factor required for ecdysteroid production in the prothoracic gland by activating transcription of the ecdysteroid biosynthesis gene spok. Binds to the 5'-AGCTTTATTATTTAG-3' DNA sequence in the spok enhancer region. This Drosophila melanogaster (Fruit fly) protein is Transcription factor Ouib.